Here is a 263-residue protein sequence, read N- to C-terminus: Diphthine synthase (263 aa).

S-adenosyl-L-methionine-binding positions include Leu11, Asp89, Ala92, 117–118 (SV), Leu166, and Leu208.

The protein belongs to the diphthine synthase family. As to quaternary structure, homodimer.

It catalyses the reaction 2-[(3S)-amino-3-carboxypropyl]-L-histidyl-[translation elongation factor 2] + 3 S-adenosyl-L-methionine = diphthine-[translation elongation factor 2] + 3 S-adenosyl-L-homocysteine + 3 H(+). Its pathway is protein modification; peptidyl-diphthamide biosynthesis. Functionally, S-adenosyl-L-methionine-dependent methyltransferase that catalyzes the trimethylation of the amino group of the modified target histidine residue in translation elongation factor 2 (EF-2), to form an intermediate called diphthine. The three successive methylation reactions represent the second step of diphthamide biosynthesis. This is Diphthine synthase from Methanopyrus kandleri (strain AV19 / DSM 6324 / JCM 9639 / NBRC 100938).